Here is a 295-residue protein sequence, read N- to C-terminus: Ethanolamine ammonia-lyase small subunit (295 aa).

V207, E228, and C258 together coordinate adenosylcob(III)alamin.

This sequence belongs to the EutC family. As to quaternary structure, the basic unit is a heterodimer which dimerizes to form tetramers. The heterotetramers trimerize; 6 large subunits form a core ring with 6 small subunits projecting outwards. Requires adenosylcob(III)alamin as cofactor.

The protein resides in the bacterial microcompartment. The catalysed reaction is ethanolamine = acetaldehyde + NH4(+). Its pathway is amine and polyamine degradation; ethanolamine degradation. Functionally, catalyzes the deamination of various vicinal amino-alcohols to oxo compounds. Allows this organism to utilize ethanolamine as the sole source of nitrogen and carbon in the presence of external vitamin B12. The polypeptide is Ethanolamine ammonia-lyase small subunit (Escherichia coli O157:H7).